The following is a 319-amino-acid chain: Lambda-crystallin homolog (319 aa).

Alanine 2 carries the N-acetylalanine modification. At serine 3 the chain carries Phosphoserine. NAD(+)-binding positions include leucine 16–isoleucine 17, aspartate 36, glutamate 97, and lysine 102.

This sequence belongs to the 3-hydroxyacyl-CoA dehydrogenase family. As to quaternary structure, homodimer. As to expression, widely expressed, with highest levels in liver. Undetectable in skeletal muscle.

Its subcellular location is the cytoplasm. The enzyme catalyses L-gulonate + NAD(+) = 3-dehydro-L-gulonate + NADH + H(+). Its activity is regulated as follows. Inhibited by malonate. Has high L-gulonate 3-dehydrogenase activity. It also exhibits low dehydrogenase activity toward L-3-hydroxybutyrate (HBA) and L-threonate. This chain is Lambda-crystallin homolog (Cryl1), found in Mus musculus (Mouse).